Here is a 406-residue protein sequence, read N- to C-terminus: Putative competence-damage inducible protein (406 aa).

This sequence belongs to the CinA family.

The protein is Putative competence-damage inducible protein of Natranaerobius thermophilus (strain ATCC BAA-1301 / DSM 18059 / JW/NM-WN-LF).